A 512-amino-acid chain; its full sequence is Histidine ammonia-lyase (512 aa).

The segment at residues 146 to 148 is a cross-link (5-imidazolinone (Ala-Gly)); the sequence is ASG. Serine 147 carries the post-translational modification 2,3-didehydroalanine (Ser).

It belongs to the PAL/histidase family. Post-translationally, contains an active site 4-methylidene-imidazol-5-one (MIO), which is formed autocatalytically by cyclization and dehydration of residues Ala-Ser-Gly.

Its subcellular location is the cytoplasm. It carries out the reaction L-histidine = trans-urocanate + NH4(+). Its pathway is amino-acid degradation; L-histidine degradation into L-glutamate; N-formimidoyl-L-glutamate from L-histidine: step 1/3. This chain is Histidine ammonia-lyase, found in Paracidovorax citrulli (strain AAC00-1) (Acidovorax citrulli).